The sequence spans 4244 residues: Tenascin-X (4244 aa).

The N-terminal stretch at 1–23 (MMPAQYALTSSLVLLVLLSTARA) is a signal peptide. The tract at residues 27 to 57 (SSRSNVTLPAPRPPPQPGGHTVGAGVGSPSS) is disordered. Asparagine 31 is a glycosylation site (N-linked (GlcNAc...) asparagine). An EGF-like 1; incomplete domain is found at 156-168 (CSCEPGWGGPTCS). The segment at 169 to 189 (DPTDAEIPPSSPPSASGSCPD) is disordered. EGF-like domains lie at 183–213 (ASGS…GPSC), 214–244 (GWPS…GPDC), 245–275 (SQRS…GDDC), 276–306 (GMRS…GEDC), 307–337 (GVRS…GEDC), 338–368 (GTRS…GEDC), 369–399 (STRT…GDDC), 400–430 (GVRS…GTDC), 431–461 (GSRA…GEDC), 462–492 (GVRS…GRDC), 493–523 (GTRA…GEDC), 524–554 (GSRR…GEDC), 555–585 (STRS…GEDC), 586–616 (GVRQ…SEDC), 617–647 (SIRT…GPTC), 648–679 (ATRM…EDCG), 684–714 (PASA…GPDC), and 715–746 (AIQT…EDCG). 54 disulfide bridges follow: cysteine 187/cysteine 197, cysteine 191/cysteine 202, cysteine 204/cysteine 213, cysteine 218/cysteine 228, cysteine 222/cysteine 233, cysteine 235/cysteine 244, cysteine 249/cysteine 259, cysteine 253/cysteine 264, cysteine 266/cysteine 275, cysteine 280/cysteine 290, cysteine 284/cysteine 295, cysteine 297/cysteine 306, cysteine 311/cysteine 321, cysteine 315/cysteine 326, cysteine 328/cysteine 337, cysteine 342/cysteine 352, cysteine 346/cysteine 357, cysteine 359/cysteine 368, cysteine 373/cysteine 383, cysteine 377/cysteine 388, cysteine 390/cysteine 399, cysteine 404/cysteine 414, cysteine 408/cysteine 419, cysteine 421/cysteine 430, cysteine 435/cysteine 445, cysteine 439/cysteine 450, cysteine 452/cysteine 461, cysteine 466/cysteine 476, cysteine 470/cysteine 481, cysteine 483/cysteine 492, cysteine 497/cysteine 507, cysteine 501/cysteine 512, cysteine 514/cysteine 523, cysteine 528/cysteine 538, cysteine 532/cysteine 543, cysteine 545/cysteine 554, cysteine 559/cysteine 569, cysteine 563/cysteine 574, cysteine 576/cysteine 585, cysteine 590/cysteine 600, cysteine 594/cysteine 605, cysteine 607/cysteine 616, cysteine 621/cysteine 631, cysteine 625/cysteine 636, cysteine 638/cysteine 647, cysteine 652/cysteine 662, cysteine 656/cysteine 667, cysteine 669/cysteine 678, cysteine 688/cysteine 698, cysteine 692/cysteine 703, cysteine 705/cysteine 714, cysteine 719/cysteine 729, cysteine 723/cysteine 734, and cysteine 736/cysteine 745. Residues 926–956 (TGSSPLGLLGTTDEPPPSGPSTTQGAQAPLL) are disordered. Fibronectin type-III domains are found at residues 959–1051 (RPQE…IMDK), 1064–1153 (RLGE…PQSD), 1161–1249 (HLGN…APER), 1263–1352 (LLGE…PQED), 1374–1468 (LLGE…TPPA), 1476–1572 (RLGE…TEAS), 1574–1669 (PPLE…RGDA), 1674–1764 (PPRL…ARSA), 1778–1868 (LGEE…REET), and 1883–1971 (HLGE…VPEE). The disordered stretch occupies residues 1340 to 1372 (PESVVAKTAPQEDVDETPSPTELGTEAPESPEE). The Cell attachment site motif lies at 1666–1668 (RGD). Residues 1752 to 1777 (PLTADGTTEARSAMDDTGTKRPPKPR) form a disordered region. The interval 1968-1990 (VPEEEKPSEPPTATPEPPIKPRL) is disordered. Residues 1976–1987 (EPPTATPEPPIK) show a composition bias toward pro residues. Fibronectin type-III domains lie at 1989 to 2089 (RLGE…SMEA), 2097 to 2185 (LLGE…APEE), 2196 to 2296 (RLGQ…TEPP), 2305 to 2398 (RLEE…TPSP), and 2408 to 2502 (PPEE…PQED). The segment at 2281 to 2304 (APGKDEEMAPASTEPPTPEPPIKP) is disordered. The tract at residues 2495 to 2542 (GVTAPQEDVDETPSPTEPGTEAPGPPEEPLLGELTVTGSSPDSLSLSW) is disordered. Positions 2506-2516 (TPSPTEPGTEA) are enriched in low complexity. Fibronectin type-III domains lie at 2519–2617 (PPEE…TTQA), 2625–2723 (PPIK…TPSP), 2733–2840 (PPEE…TTPE), 2841–2939 (PPNK…TPAP), 2949–3042 (PPEE…APKD), 3062–3153 (RLGE…TPSP), 3168–3260 (LLGE…TPLP), 3264–3355 (RLGE…TKPS), 3357–3446 (RLGE…PLEK), 3451–3544 (HLGE…TPAP), 3553–3647 (PPEE…LAPA), 3657–3754 (RLSQ…TLSP), 3758–3847 (SPRD…VPDG), 3848–3934 (PTQL…TGLE), and 3935–4025 (APRD…LRIP). The span at 2530–2542 (VTGSSPDSLSLSW) shows a compositional bias: polar residues. 2 disordered regions span residues 2824-2847 (PEDE…KPRL) and 2933-2969 (EEET…DSLS). A compositionally biased stretch (low complexity) spans 2937-2946 (PAPTEPSTEA). The span at 2960–2969 (VTGSSPDSLS) shows a compositional bias: polar residues. Disordered stretches follow at residues 3536 to 3559 (APEE…EPRL) and 3636 to 3662 (LSAE…SQLS). N-linked (GlcNAc...) asparagine glycans are attached at residues asparagine 3855, asparagine 3908, and asparagine 3920. The Fibrinogen C-terminal domain maps to 4021–4236 (GLRIPFPRDC…FTEMKLRPRN (216 aa)). Cysteines 4030 and 4060 form a disulfide. Asparagine 4095 carries an N-linked (GlcNAc...) asparagine glycan. Residues cysteine 4182 and cysteine 4195 are joined by a disulfide bond.

The protein belongs to the tenascin family. Homotrimer. Interacts with type I, III and V collagens and tropoelastin via its 29th fibronectin type-III domain. In terms of tissue distribution, highly expressed in fetal adrenal, in fetal testis, fetal smooth, striated and cardiac muscle. Isoform XB-short is only expressed in the adrenal gland.

It localises to the secreted. It is found in the extracellular space. Its subcellular location is the extracellular matrix. Appears to mediate interactions between cells and the extracellular matrix. Substrate-adhesion molecule that appears to inhibit cell migration. Accelerates collagen fibril formation. May play a role in supporting the growth of epithelial tumors. The chain is Tenascin-X from Homo sapiens (Human).